The following is a 1945-amino-acid chain: Rho GTPase-activating protein 21 (1945 aa).

The segment at 26–53 is disordered; the sequence is CEVSKNKDGKDQGEPVSPSEDEPFSWPG. Residues 29–38 show a composition bias toward basic and acidic residues; it reads SKNKDGKDQG. 2 positions are modified to phosphoserine: Ser42 and Ser63. A PDZ domain is found at 56-165; sequence TVMLKRTSQG…TLELSVMPKD (110 aa). 2 disordered regions span residues 210–229 and 326–365; these read TAQP…QQTS and HQTT…DSPP. Low complexity predominate over residues 347–358; the sequence is SGHSEGISSSRS. Phosphoserine is present on Ser454. Residues 499 to 512 are compositionally biased toward polar residues; it reads EATATVNSESQIPD. The segment at 499–519 is disordered; that stretch reads EATATVNSESQIPDSNGERKQ. An omega-N-methylarginine mark is found at Arg549 and Arg569. Disordered stretches follow at residues 573-647 and 674-702; these read PVSQ…RPVN and EVSS…LELP. The span at 589–600 shows a compositional bias: polar residues; the sequence is SNRNFPTTTGVS. Phosphoserine occurs at positions 610 and 619. The segment covering 674–696 has biased composition (polar residues); that stretch reads EVSSCLPGTSAKTSPQLSENLGT. The residue at position 741 (Thr741) is a Phosphothreonine. Ser851, Ser856, and Ser875 each carry phosphoserine. Disordered stretches follow at residues 852–879 and 902–921; these read HDQE…YDEG and ITDS…SSSE. Residues 866–879 are compositionally biased toward basic and acidic residues; the sequence is HSSKTERSKSYDEG. Residue Tyr876 is modified to Phosphotyrosine. 5 positions are modified to phosphoserine: Ser918, Ser920, Ser948, Ser1093, and Ser1109. The tract at residues 924-1091 is interaction with ARF1 and ARF6; it reads SDAAREGWLQ…AKSEPKTQSP (168 aa). In terms of domain architecture, PH spans 925-1034; that stretch reads DAAREGWLQF…WIKTIQESSN (110 aa). The tract at residues 1080-1120 is disordered; that stretch reads LGAKSEPKTQSPHSPKEESERKLLSKDDTSPPKDKGTWRRG. Residues 1093–1116 show a composition bias toward basic and acidic residues; that stretch reads SPKEESERKLLSKDDTSPPKDKGT. In terms of domain architecture, Rho-GAP spans 1141–1333; sequence VRLDDCPPAH…TLIQHHDWFF (193 aa). Disordered regions lie at residues 1373–1396, 1412–1632, 1649–1794, and 1846–1945; these read PGDV…SGKD, SRKR…PVFP, ARVS…LGGH, and RTSA…ETPP. The segment covering 1377–1395 has biased composition (low complexity); the sequence is SDSATSDSAKSKGSWGSGK. A phosphoserine mark is found at Ser1412, Ser1426, and Ser1427. 2 stretches are compositionally biased toward basic and acidic residues: residues 1435–1457 and 1471–1488; these read FFKK…RESE and SNTK…KIPW. Lys1438 is covalently cross-linked (Glycyl lysine isopeptide (Lys-Gly) (interchain with G-Cter in SUMO)). Phosphothreonine is present on Thr1504. 2 stretches are compositionally biased toward low complexity: residues 1531–1556 and 1569–1589; these read SDSG…STSP and TTTS…LDSS. Positions 1579-1848 are interaction with CTNNA1; the sequence is STTYLTSLDS…WLARERVRTS (270 aa). Polar residues predominate over residues 1590-1599; the sequence is RLSPEVQSVA. Basic and acidic residues predominate over residues 1611-1621; it reads SELVSEGRPVE. Ser1656 bears the Phosphoserine mark. Composition is skewed to polar residues over residues 1658–1681 and 1729–1738; these read GSEA…QFSS and STGSLLTPSR. Residue Thr1669 is modified to Phosphothreonine. Ser1729 is modified (phosphoserine). Residues 1739-1757 show a composition bias toward basic and acidic residues; that stretch reads SESEKQEATWKTKIADRLK. Residues 1782–1792 show a composition bias toward basic residues; sequence RKNIKRRHTLG. Residues 1871 to 1882 show a composition bias toward polar residues; sequence PISTHSPPSQQP. Residues 1887-1896 show a composition bias toward low complexity; the sequence is AATSTLASTS. Position 1902 is a phosphothreonine (Thr1902). Ser1906 is modified (phosphoserine). Residues 1907 to 1927 are compositionally biased toward polar residues; that stretch reads PDQINRESFQNMSQNASSTAN. Positions 1932 to 1945 are enriched in basic and acidic residues; it reads KQSESPDTKAETPP.

Interacts with CTNNA1. Interacts with GTP-bound ARF1 and probably ARF6. Post-translationally, sumoylated with SUMO2 and SUMO3 in proliferating lymphocytes.

Its subcellular location is the golgi apparatus membrane. The protein resides in the cell junction. It is found in the cytoplasmic vesicle membrane. The protein localises to the cytoplasm. It localises to the cytoskeleton. Functions as a GTPase-activating protein (GAP) for RHOA and CDC42. Downstream partner of ARF1 which may control Golgi apparatus structure and function. Also required for CTNNA1 recruitment to adherens junctions. The protein is Rho GTPase-activating protein 21 of Mus musculus (Mouse).